The primary structure comprises 517 residues: Ubiquitin carboxyl-terminal hydrolase 30 (517 aa).

At 1 to 35 (MLSSRAQAARTAADKALQRFLRTGAAVRYKVMKNW) the chain is on the mitochondrial intermembrane side. The helical transmembrane segment at 36–56 (GVIGGIAAALAAGIYVIWGPI) threads the bilayer. Residues 57-517 (TERKKRRKGL…QQGREYRSEE (461 aa)) lie on the Cytoplasmic side of the membrane. Residues 68–502 (PGLVNLGNTC…SAYLLFYERV (435 aa)) form the USP domain. The active-site Nucleophile is cysteine 77. Residues lysine 235 and lysine 289 each participate in a glycyl lysine isopeptide (Lys-Gly) (interchain with G-Cter in ubiquitin) cross-link. The segment at 364 to 395 (SQHGPKATESPGSALGVQDTQAAPKPGLSQPA) is disordered. The Proton acceptor role is filled by histidine 452.

Belongs to the peptidase C19 family. In terms of processing, ubiquitinated by parkin (PRKN) at Lys-235 and Lys-289, leading to its degradation.

The protein localises to the mitochondrion outer membrane. The enzyme catalyses Thiol-dependent hydrolysis of ester, thioester, amide, peptide and isopeptide bonds formed by the C-terminal Gly of ubiquitin (a 76-residue protein attached to proteins as an intracellular targeting signal).. Its activity is regulated as follows. Inhibited by the diterpenoid derivative 15-oxospiramilactone (S3). In terms of biological role, deubiquitinating enzyme tethered to the mitochondrial outer membrane that acts as a key inhibitor of mitophagy by counteracting the action of parkin (PRKN): hydrolyzes ubiquitin attached by parkin on target proteins, such as RHOT1/MIRO1 and TOMM20, thereby blocking parkin's ability to drive mitophagy. Preferentially cleaves 'Lys-6'- and 'Lys-11'-linked polyubiquitin chains, 2 types of linkage that participate in mitophagic signaling. Does not cleave efficiently polyubiquitin phosphorylated at 'Ser-65'. Acts as a negative regulator of mitochondrial fusion by mediating deubiquitination of MFN1 and MFN2. This Rattus norvegicus (Rat) protein is Ubiquitin carboxyl-terminal hydrolase 30 (Usp30).